The sequence spans 401 residues: (1R,4R,5S)-(-)-guaia-6,10(14)-diene synthase (401 aa).

Positions 1–21 are disordered; sequence MVKFDSGSESEMTNGDDLHIN. Mg(2+) contacts are provided by Asp134 and Glu139. The DDXXD motif signature appears at 134 to 138; that stretch reads DDQFD. Residue Arg242 coordinates substrate. Positions 288 and 292 each coordinate Mg(2+). A substrate-binding site is contributed by Lys295. Asp296 contributes to the Mg(2+) binding site. 375-376 contacts substrate; the sequence is RY.

It belongs to the terpene synthase family. It depends on Mg(2+) as a cofactor.

It catalyses the reaction (2E,6E)-farnesyl diphosphate = (1R,4R,5S)-(-)-guaia-6,10(14)-diene + diphosphate. The protein operates within secondary metabolite biosynthesis; terpenoid biosynthesis. Its function is as follows. Catalyzes the conversion of (2E,6E)-farnesyl diphosphate (FPP) to yield the bicyclic sesquiterpene guaia-6,10(14)-diene via a 1,10-cyclization, which requires the abstraction of the pyrophosphate from FPP to yield the (E,E)-germacradienyl cation. The only accepted substrate is farnesyl diphosphate (FPP). The protein is (1R,4R,5S)-(-)-guaia-6,10(14)-diene synthase of Fusarium proliferatum (strain ET1) (Orchid endophyte fungus).